The sequence spans 475 residues: Ribulose bisphosphate carboxylase large chain (475 aa).

A propeptide spanning residues 1–2 is cleaved from the precursor; it reads MS. At P3 the chain carries N-acetylproline. Position 14 is an N6,N6,N6-trimethyllysine (K14). Substrate-binding residues include N123 and T173. K175 acts as the Proton acceptor in catalysis. K177 provides a ligand contact to substrate. Mg(2+) contacts are provided by K201, D203, and E204. Residue K201 is modified to N6-carboxylysine. H294 functions as the Proton acceptor in the catalytic mechanism. Residues R295, H327, and S379 each coordinate substrate.

It belongs to the RuBisCO large chain family. Type I subfamily. In terms of assembly, heterohexadecamer of 8 large chains and 8 small chains. Requires Mg(2+) as cofactor.

It localises to the plastid. Its subcellular location is the chloroplast. It catalyses the reaction 2 (2R)-3-phosphoglycerate + 2 H(+) = D-ribulose 1,5-bisphosphate + CO2 + H2O. The enzyme catalyses D-ribulose 1,5-bisphosphate + O2 = 2-phosphoglycolate + (2R)-3-phosphoglycerate + 2 H(+). Its function is as follows. RuBisCO catalyzes two reactions: the carboxylation of D-ribulose 1,5-bisphosphate, the primary event in carbon dioxide fixation, as well as the oxidative fragmentation of the pentose substrate in the photorespiration process. Both reactions occur simultaneously and in competition at the same active site. This Bazzania trilobata (Greater whipwort) protein is Ribulose bisphosphate carboxylase large chain.